An 88-amino-acid chain; its full sequence is Small ribosomal subunit protein uS15 (88 aa).

Residues Met-1–Asp-20 show a composition bias toward basic and acidic residues. The tract at residues Met-1–Thr-21 is disordered.

Belongs to the universal ribosomal protein uS15 family. Part of the 30S ribosomal subunit. Forms a bridge to the 50S subunit in the 70S ribosome, contacting the 23S rRNA.

One of the primary rRNA binding proteins, it binds directly to 16S rRNA where it helps nucleate assembly of the platform of the 30S subunit by binding and bridging several RNA helices of the 16S rRNA. Its function is as follows. Forms an intersubunit bridge (bridge B4) with the 23S rRNA of the 50S subunit in the ribosome. The polypeptide is Small ribosomal subunit protein uS15 (Syntrophotalea carbinolica (strain DSM 2380 / NBRC 103641 / GraBd1) (Pelobacter carbinolicus)).